Here is a 1092-residue protein sequence, read N- to C-terminus: Probable cellulose synthase A catalytic subunit 6 [UDP-forming] (1092 aa).

At 1–280 the chain is on the cytoplasmic side; the sequence is MEASAGLVAG…SSSRINPYRM (280 aa). Positions 42, 45, 61, 64, 69, 72, 84, and 87 each coordinate Zn(2+). The RING-type; degenerate zinc finger occupies 42–88; sequence CQICGDDVGEGPDGEPFVACNECAFPVCRNCYDYERREGSQACPQCK. The tract at residues 100–123 is disordered; the sequence is VAGDEEEDGVDDLEGEFGLDGRED. Over residues 103–116 the composition is skewed to acidic residues; the sequence is DEEEDGVDDLEGEF. The chain crosses the membrane as a helical span at residues 281–301; it reads IIIIRLVVLGFFFHYRVMHPV. Residues 302-303 lie on the Extracellular side of the membrane; that stretch reads ND. Residues 304–324 traverse the membrane as a helical segment; it reads AFALWLISVICEIWFAMSWIL. Residues 325–868 are Cytoplasmic-facing; sequence DQFPKWLPIE…FLERFSYINS (544 aa). UDP-alpha-D-glucose-binding residues include S363, K369, E370, and D399. D399 is an active-site residue. Residues 453–480 adopt a coiled-coil conformation; the sequence is VRERRAMKRDYEEFKVRINALVAKAQKV. UDP-alpha-D-glucose is bound at residue K540. K541 and D565 together coordinate Mn(2+). The active site involves D792. Residues 869–889 traverse the membrane as a helical segment; that stretch reads IVYPWTSIPLLAYCTLPAICL. At 890–901 the chain is on the extracellular side; that stretch reads LTGKFITPELTN. A helical membrane pass occupies residues 902–922; the sequence is VASLWFMSLFICIFVTGILEM. Residues 923-937 lie on the Cytoplasmic side of the membrane; it reads RWSGVAIDDWWRNEQ. The helical transmembrane segment at 938–958 threads the bilayer; sequence FWVIGGVSSHLFAVFQGLLKV. At 959–987 the chain is on the extracellular side; it reads LAGVDTSFTVTSKAGDDEEFSELYTFKWT. A helical membrane pass occupies residues 988–1008; it reads TLLIPPTTLLLLNFIGVVAGV. Over 1009–1019 the chain is Cytoplasmic; it reads SNAINNGYESW. A helical membrane pass occupies residues 1020–1040; it reads GPLFGKLFFAFWVIVHLYPFL. Residues 1041–1049 are Extracellular-facing; that stretch reads KGLVGRQNR. The helical transmembrane segment at 1050–1070 threads the bilayer; the sequence is TPTIVIVWSILLASIFSLLWV. Residues 1071-1092 are Cytoplasmic-facing; it reads RIDPFLAKNNGPLLEECGLDCN.

It belongs to the glycosyltransferase 2 family. Plant cellulose synthase subfamily. The cofactor is Mn(2+). Zn(2+) is required as a cofactor.

The protein resides in the cell membrane. The catalysed reaction is [(1-&gt;4)-beta-D-glucosyl](n) + UDP-alpha-D-glucose = [(1-&gt;4)-beta-D-glucosyl](n+1) + UDP + H(+). Its pathway is glycan metabolism; plant cellulose biosynthesis. Its function is as follows. Probable catalytic subunit of cellulose synthase terminal complexes ('rosettes'), required for beta-1,4-glucan microfibril crystallization, a major mechanism of the cell wall formation. The sequence is that of Probable cellulose synthase A catalytic subunit 6 [UDP-forming] (CESA6) from Oryza sativa subsp. japonica (Rice).